Reading from the N-terminus, the 237-residue chain is DNA repair protein RecO (237 aa).

Belongs to the RecO family.

Functionally, involved in DNA repair and RecF pathway recombination. This Rickettsia rickettsii (strain Iowa) protein is DNA repair protein RecO.